The sequence spans 220 residues: Deoxyribose-phosphate aldolase (220 aa).

Asp-89 functions as the Proton donor/acceptor in the catalytic mechanism. The Schiff-base intermediate with acetaldehyde role is filled by Lys-151. The active-site Proton donor/acceptor is Lys-180.

It belongs to the DeoC/FbaB aldolase family. DeoC type 1 subfamily.

Its subcellular location is the cytoplasm. It carries out the reaction 2-deoxy-D-ribose 5-phosphate = D-glyceraldehyde 3-phosphate + acetaldehyde. It participates in carbohydrate degradation; 2-deoxy-D-ribose 1-phosphate degradation; D-glyceraldehyde 3-phosphate and acetaldehyde from 2-deoxy-alpha-D-ribose 1-phosphate: step 2/2. Its function is as follows. Catalyzes a reversible aldol reaction between acetaldehyde and D-glyceraldehyde 3-phosphate to generate 2-deoxy-D-ribose 5-phosphate. The chain is Deoxyribose-phosphate aldolase from Lactococcus lactis subsp. lactis (strain IL1403) (Streptococcus lactis).